The chain runs to 336 residues: Inactive serine/threonine-protein kinase BKN2 (336 aa).

A disordered region spans residues M1–S25. G2 carries N-myristoyl glycine lipidation. Residue C4 is the site of S-palmitoyl cysteine attachment. The 281-residue stretch at Y52–A332 folds into the Protein kinase domain.

The protein belongs to the protein kinase superfamily. Ser/Thr protein kinase family. In terms of assembly, component of an immune signaling complex made of, at least, SZE1, BKN2/SZE2, ZAR1 and ZED1. Interacts directly with ZAR1 and Pseudomonas syringae HOPZ1A at the plasma membrane. N-terminal myristoylation is critical for plasma membrane localization and implication in defense responses. In terms of tissue distribution, expressed in stigma and ovaries in flowers, and in stems and seedlings.

The protein localises to the cell membrane. Together with SZE1 and ZED1, required for effector-triggered immunity (e.g. Pseudomonas syringae type III effector HopZ1a) via the activation of ZAR1, thus being essential for resistance against P. syringae pv. tomato DC3000 expressing HopZ1a. Collaboratively with BKN1, involved in compatible pollen-stigma interactions. This Arabidopsis thaliana (Mouse-ear cress) protein is Inactive serine/threonine-protein kinase BKN2.